A 692-amino-acid chain; its full sequence is Protein arginine N-methyltransferase 7 (692 aa).

SAM-dependent MTase PRMT-type domains lie at 14–359 (ENSW…YSLW) and 368–692 (AKTV…QEKR).

This sequence belongs to the class I-like SAM-binding methyltransferase superfamily. Protein arginine N-methyltransferase family. PRMT7 subfamily.

Functionally, essential arginine methyltransferase that can both catalyze the formation of omega-N monomethylarginine (MMA) and symmetrical dimethylarginine (sDMA). Specifically mediates the symmetrical dimethylation of arginine residues in the small nuclear ribonucleoproteins SmD1 and SmD3. The protein is Protein arginine N-methyltransferase 7 (Art7) of Drosophila pseudoobscura pseudoobscura (Fruit fly).